Reading from the N-terminus, the 348-residue chain is MKNLLGSSINDLENVALDYGQAAFRGRQIYNWIYNYRNKNKNIDQIEVLPLDFREKLKVDGFKVSELVIKERNLANDGTLKLLLSTEDNESIECVGIPTEKRLTACLSSQVGCPMDCKFCATGKEGLKRSLKASEILDQILFIEYEMNRKVTNIVFMGMGEPLLNIDELLLSIRSINNDFQISQRKITVSTVAIPKMISKLSAKSFQILSNCQFTLAISLHASNQKTRETIIPSAKNYEIKNIIEDCKTFVRETGRRVSFEYLMLSGVNDKLEHACELSNLLKGFQCHVNLIQYNQIDEVEFQRTSLKNLQLFQSRLVNNGIAVSLRKSRGLDKNAACGQLRQNAKSK.

E93 functions as the Proton acceptor in the catalytic mechanism. The 235-residue stretch at 99–333 (TEKRLTACLS…VSLRKSRGLD (235 aa)) folds into the Radical SAM core domain. A disulfide bond links C106 and C338. The [4Fe-4S] cluster site is built by C113, C117, and C120. Residues 160–161 (GE), S190, 219–221 (SLH), and N295 each bind S-adenosyl-L-methionine. C338 serves as the catalytic S-methylcysteine intermediate.

Belongs to the radical SAM superfamily. RlmN family. [4Fe-4S] cluster is required as a cofactor.

It is found in the cytoplasm. It catalyses the reaction adenosine(2503) in 23S rRNA + 2 reduced [2Fe-2S]-[ferredoxin] + 2 S-adenosyl-L-methionine = 2-methyladenosine(2503) in 23S rRNA + 5'-deoxyadenosine + L-methionine + 2 oxidized [2Fe-2S]-[ferredoxin] + S-adenosyl-L-homocysteine. It carries out the reaction adenosine(37) in tRNA + 2 reduced [2Fe-2S]-[ferredoxin] + 2 S-adenosyl-L-methionine = 2-methyladenosine(37) in tRNA + 5'-deoxyadenosine + L-methionine + 2 oxidized [2Fe-2S]-[ferredoxin] + S-adenosyl-L-homocysteine. In terms of biological role, specifically methylates position 2 of adenine 2503 in 23S rRNA and position 2 of adenine 37 in tRNAs. The chain is Probable dual-specificity RNA methyltransferase RlmN from Prochlorococcus marinus (strain AS9601).